A 180-amino-acid chain; its full sequence is Adenine phosphoribosyltransferase (180 aa).

Ala2 bears the N-acetylalanine mark. Phosphoserine is present on residues Ser15 and Ser30. Tyr60 carries the phosphotyrosine modification. A Phosphoserine modification is found at Ser66. Lys114 is subject to N6-acetyllysine. Position 135 is a phosphothreonine (Thr135).

The protein belongs to the purine/pyrimidine phosphoribosyltransferase family. As to quaternary structure, homodimer.

Its subcellular location is the cytoplasm. The catalysed reaction is AMP + diphosphate = 5-phospho-alpha-D-ribose 1-diphosphate + adenine. It participates in purine metabolism; AMP biosynthesis via salvage pathway; AMP from adenine: step 1/1. In terms of biological role, catalyzes a salvage reaction resulting in the formation of AMP, that is energically less costly than de novo synthesis. This is Adenine phosphoribosyltransferase from Dipodillus campestris (North African gerbil).